The sequence spans 112 residues: CLAVATA3/ESR (CLE)-related protein 44 (112 aa).

The N-terminal stretch at 1–39 (MATTIDQTSIKSLHFHQVIRLIITIIFLAFLFLIGPTSS) is a signal peptide. Residues 41–112 (NHHLHESSSK…VPSGPNPISN (72 aa)) form a disordered region. Polar residues predominate over residues 62–71 (QPSTPSSSTM). P104 and P107 each carry hydroxyproline. P107 carries an O-linked (Ara...) hydroxyproline glycan.

The protein belongs to the CLV3/ESR signal peptide family. Interacts specifically with the leucine-rich repeat receptor-like protein kinase TDR, especially in the presence of SERK2. In terms of processing, the O-glycosylation (arabinosylation) of the hydroxyproline Pro-107 enhances binding affinity of the CLE44p peptide for its receptor. In terms of tissue distribution, mostly expressed in flowers and leaves. Widely expressed along the vascular strands. In roots and hypocotyls, present in endodermal cells as well as cells in the phloem and the adjacent pericycle.

It localises to the secreted. The protein resides in the extracellular space. Its function is as follows. Extracellular signal peptide that regulates cell fate. May act with TDR as a ligand-receptor pair in a signal transduction pathway that represses tracheary element differentiation but promotes the formation of procambial cells adjacent to phloem cells in the veins. Regulates the transition of protophloem cells from proliferation to differentiation, thus impinging on postembryonic growth capacity of the root meristem; this signaling pathway requires CRN and CLV2. This Arabidopsis thaliana (Mouse-ear cress) protein is CLAVATA3/ESR (CLE)-related protein 44.